The primary structure comprises 809 residues: Ribosome biogenesis protein ERB1 (809 aa).

The disordered stretch occupies residues 1 to 107; that stretch reads MSKSSKVGMT…SDTRSITDAI (107 aa). Acidic residues-rich tracts occupy residues 30 to 70 and 77 to 97; these read AEVD…EDSD and LGEE…EPQE. The segment at 267–383 is required for interaction with NOP7; that stretch reads RFVPSKHEAK…LRKVPGYQES (117 aa). The interval 383 to 419 is required for interaction with YTM1; it reads SVRERFERCLDLYLAPRVRHNKLNIDPESLIPELPSP. WD repeat units lie at residues 435 to 474 and 483 to 523; these read GHTD…QVFN and NDED…FDIE. Positions 545–569 are disordered; sequence EEKFKNDEGNEDEDDEDDSATSTAV. Over residues 553–563 the composition is skewed to acidic residues; that stretch reads GNEDEDDEDDS. WD repeat units lie at residues 593-635, 638-676, 679-718, 722-762, and 778-809; these read QCRK…SQSP, KSKG…LVKK, PGVR…TPYK, YHEK…DLMT, and VNSI…LWTT.

Belongs to the WD repeat BOP1/ERB1 family. In terms of assembly, component of the NOP7 complex, composed of ERB1, NOP7 and YTM1. The complex is held together by ERB1, which interacts with NOP7 via its N-terminal domain and with YTM1 via a high-affinity interaction between the seven-bladed beta-propeller domains of the 2 proteins. The NOP7 complex associates with the 66S pre-ribosome.

Its subcellular location is the nucleus. It is found in the nucleolus. The protein resides in the nucleoplasm. Component of the NOP7 complex, which is required for maturation of the 25S and 5.8S ribosomal RNAs and formation of the 60S ribosome. This chain is Ribosome biogenesis protein ERB1, found in Scheffersomyces stipitis (strain ATCC 58785 / CBS 6054 / NBRC 10063 / NRRL Y-11545) (Yeast).